A 100-amino-acid chain; its full sequence is uncharacterized protein (100 aa).

Residues 28–45 (VFLVFYIITMVKIYIFLI) form a helical membrane-spanning segment.

The protein resides in the membrane. This is an uncharacterized protein from Saccharomyces cerevisiae (strain ATCC 204508 / S288c) (Baker's yeast).